Reading from the N-terminus, the 425-residue chain is Serine--tRNA ligase (425 aa).

233 to 235 (TAE) contributes to the L-serine binding site. ATP is bound at residue 264 to 266 (RAE). An L-serine-binding site is contributed by glutamate 287. 351 to 354 (EISS) contacts ATP. Serine 387 serves as a coordination point for L-serine.

This sequence belongs to the class-II aminoacyl-tRNA synthetase family. Type-1 seryl-tRNA synthetase subfamily. Homodimer. The tRNA molecule binds across the dimer.

The protein resides in the cytoplasm. It carries out the reaction tRNA(Ser) + L-serine + ATP = L-seryl-tRNA(Ser) + AMP + diphosphate + H(+). The catalysed reaction is tRNA(Sec) + L-serine + ATP = L-seryl-tRNA(Sec) + AMP + diphosphate + H(+). It participates in aminoacyl-tRNA biosynthesis; selenocysteinyl-tRNA(Sec) biosynthesis; L-seryl-tRNA(Sec) from L-serine and tRNA(Sec): step 1/1. Functionally, catalyzes the attachment of serine to tRNA(Ser). Is also able to aminoacylate tRNA(Sec) with serine, to form the misacylated tRNA L-seryl-tRNA(Sec), which will be further converted into selenocysteinyl-tRNA(Sec). This is Serine--tRNA ligase from Clostridium perfringens (strain SM101 / Type A).